Consider the following 580-residue polypeptide: Transcription factor coe2-B (580 aa).

The segment at 60–63 is interaction with DNA; that stretch reads RKSN. Residues 148–167 form a C5-type zinc finger; the sequence is CRVLLTHEVMCSRCCEKKSC. 2 interaction with DNA regions span residues 194-201 and 233-236; these read NCLKTAGN and NNSK. An IPT/TIG domain is found at 259-341; it reads PCIKAISPSE…CKGAPGRFIY (83 aa). The segment at 455 to 492 is disordered; the sequence is IRNTSSISPRGYSSSSTPQQSNYSTPSNSMNGYSNVPM. Low complexity predominate over residues 459–481; sequence SSISPRGYSSSSTPQQSNYSTPS. Residues 482–492 show a composition bias toward polar residues; that stretch reads NSMNGYSNVPM.

The protein belongs to the COE family. In terms of tissue distribution, in embryos, expressed in precursors of primary neurons. In adults, expressed at high levels in the brain, and at low levels in the somatic muscles, testis, and possibly the spleen.

Its subcellular location is the nucleus. May play a pivotal role in the transcriptional cascade that specifies primary neurons in embryos. Stabilizes the higher neural potential of selected progenitor cells that express neurog2/X-ngnr-1 by maintaining Delta-Notch signaling. Thus ensures the transition between neural competence and irreversible commitment to a neural fate. Also promotes neuronal differentiation by activating neurod1 expression, directly or indirectly. This is Transcription factor coe2-B from Xenopus laevis (African clawed frog).